We begin with the raw amino-acid sequence, 159 residues long: Large ribosomal subunit protein eL29 (159 aa).

Over residues 1-26 (MAKSKNHTTHNQSRKWHRNGIKKPRS) the composition is skewed to basic residues. Positions 1–32 (MAKSKNHTTHNQSRKWHRNGIKKPRSQRYESL) are disordered. Lys5 carries the N6-methyllysine modification. Ser31 is subject to Phosphoserine. Lys33 bears the N6-acetyllysine mark. Basic residues predominate over residues 117-127 (RLCRPKAKAKA). The disordered stretch occupies residues 117-159 (RLCRPKAKAKAKAKDQTKAQAAAPASVPAQAPKRTQAPTKASE). Over residues 134–149 (KAQAAAPASVPAQAPK) the composition is skewed to low complexity. The residue at position 142 (Ser142) is a Phosphoserine.

Belongs to the eukaryotic ribosomal protein eL29 family. As to quaternary structure, component of the large ribosomal subunit.

The protein localises to the cytoplasm. Functionally, component of the large ribosomal subunit. The ribosome is a large ribonucleoprotein complex responsible for the synthesis of proteins in the cell. The polypeptide is Large ribosomal subunit protein eL29 (RPL29) (Homo sapiens (Human)).